The primary structure comprises 194 residues: Imidazoleglycerol-phosphate dehydratase (194 aa).

It belongs to the imidazoleglycerol-phosphate dehydratase family.

It is found in the cytoplasm. The catalysed reaction is D-erythro-1-(imidazol-4-yl)glycerol 3-phosphate = 3-(imidazol-4-yl)-2-oxopropyl phosphate + H2O. Its pathway is amino-acid biosynthesis; L-histidine biosynthesis; L-histidine from 5-phospho-alpha-D-ribose 1-diphosphate: step 6/9. This chain is Imidazoleglycerol-phosphate dehydratase, found in Chlorobaculum parvum (strain DSM 263 / NCIMB 8327) (Chlorobium vibrioforme subsp. thiosulfatophilum).